Here is a 348-residue protein sequence, read N- to C-terminus: Fe-S cluster assembly protein DRE2 (348 aa).

The N-terminal SAM-like domain stretch occupies residues 1-162; that stretch reads MSQYKTGLLL…KKASSSTSNL (162 aa). The interval 137–170 is disordered; sequence KTNNTKLQSGSKLPTFKKASSSTSNLPSFKKADH. Positions 144-163 are enriched in polar residues; sequence QSGSKLPTFKKASSSTSNLP. The segment at 163–242 is linker; sequence PSFKKADHSR…EEELIDEDGS (80 aa). Ser206 is modified (phosphoserine). Residues Cys252, Cys263, Cys266, and Cys268 each coordinate [2Fe-2S] cluster. The fe-S binding site A stretch occupies residues 252 to 268; sequence CGKSKTKKKKACKDCTC. The [4Fe-4S] cluster site is built by Cys311, Cys314, Cys322, and Cys325. 2 short sequence motifs (cx2C motif) span residues 311–314 and 322–325; these read CGSC and CSGC. The interval 311 to 325 is fe-S binding site B; sequence CGSCSLGDAFRCSGC.

The protein belongs to the anamorsin family. As to quaternary structure, monomer. Interacts with TAH18. Interacts with MIA40. [2Fe-2S] cluster serves as cofactor. It depends on [4Fe-4S] cluster as a cofactor.

The protein localises to the cytoplasm. It is found in the mitochondrion intermembrane space. Component of the cytosolic iron-sulfur (Fe-S) protein assembly (CIA) machinery required for the maturation of extramitochondrial Fe-S proteins. Part of an electron transfer chain functioning in an early step of cytosolic Fe-S biogenesis, facilitating the de novo assembly of a [4Fe-4S] cluster on the scaffold complex CFD1-NBP35. Electrons are transferred to DRE2 from NADPH via the FAD- and FMN-containing protein TAH18. TAH18-DRE2 are also required for the assembly of the diferric tyrosyl radical cofactor of ribonucleotide reductase (RNR), probably by providing electrons for reduction during radical cofactor maturation in the catalytic small subunit RNR2. This Saccharomyces cerevisiae (strain Lalvin EC1118 / Prise de mousse) (Baker's yeast) protein is Fe-S cluster assembly protein DRE2.